Consider the following 311-residue polypeptide: Malate dehydrogenase (311 aa).

Residues 7 to 13 (GAAGGIG) and D34 each bind NAD(+). Positions 81 and 87 each coordinate substrate. NAD(+) contacts are provided by residues N94 and 117–119 (ITN). Residues N119 and R153 each contribute to the substrate site. The Proton acceptor role is filled by H177. M227 provides a ligand contact to NAD(+).

The protein belongs to the LDH/MDH superfamily. MDH type 1 family. As to quaternary structure, homodimer.

It catalyses the reaction (S)-malate + NAD(+) = oxaloacetate + NADH + H(+). In terms of biological role, catalyzes the reversible oxidation of malate to oxaloacetate. In Aliivibrio fischeri (strain MJ11) (Vibrio fischeri), this protein is Malate dehydrogenase.